Here is a 206-residue protein sequence, read N- to C-terminus: Small ribosomal subunit protein uS4 (206 aa).

Residues 96–157 (SRLDNVVYRM…KAQKQLRVQA (62 aa)) form the S4 RNA-binding domain.

The protein belongs to the universal ribosomal protein uS4 family. In terms of assembly, part of the 30S ribosomal subunit. Contacts protein S5. The interaction surface between S4 and S5 is involved in control of translational fidelity.

In terms of biological role, one of the primary rRNA binding proteins, it binds directly to 16S rRNA where it nucleates assembly of the body of the 30S subunit. With S5 and S12 plays an important role in translational accuracy. The protein is Small ribosomal subunit protein uS4 of Alkalilimnicola ehrlichii (strain ATCC BAA-1101 / DSM 17681 / MLHE-1).